Consider the following 194-residue polypeptide: Recombination protein RecR (194 aa).

Residues 55–70 form a C4-type zinc finger; it reads CRECGNLAEGELCPIC. The Toprim domain maps to 78–171; that stretch reads SLLAVVESVA…RVTRPAYGLP (94 aa).

Belongs to the RecR family.

May play a role in DNA repair. It seems to be involved in an RecBC-independent recombinational process of DNA repair. It may act with RecF and RecO. In Thermus thermophilus (strain ATCC 27634 / DSM 579 / HB8), this protein is Recombination protein RecR.